The sequence spans 103 residues: PTS system lactose-specific EIIA component (103 aa).

The 102-residue stretch at 1 to 102 (MNREEVQLLG…MKHLLEFYKR (102 aa)) folds into the PTS EIIA type-3 domain. Catalysis depends on His-78, which acts as the Tele-phosphohistidine intermediate. His-78 carries the phosphohistidine; by HPr modification. Residue Asp-81 coordinates Mg(2+).

Homotrimer. Requires Mg(2+) as cofactor.

The protein localises to the cytoplasm. In terms of biological role, the phosphoenolpyruvate-dependent sugar phosphotransferase system (sugar PTS), a major carbohydrate active transport system, catalyzes the phosphorylation of incoming sugar substrates concomitantly with their translocation across the cell membrane. The enzyme II LacEF PTS system is involved in lactose transport. The protein is PTS system lactose-specific EIIA component of Staphylococcus aureus (strain COL).